The following is a 331-amino-acid chain: Glycerophosphodiester phosphodiesterase 1 (331 aa).

The Cytoplasmic portion of the chain corresponds to 1 to 3 (MWL). Residues 4-24 (WEDQGGLLGPFSFVLVLLLVV) form a helical membrane-spanning segment. Residues 25 to 248 (TRSPFNACVL…PRYSVFWKQS (224 aa)) lie on the Lumenal side of the membrane. The GP-PDE domain maps to 65–331 (VSAIAHRGGS…SMLEDCAPHF (267 aa)). Mg(2+) contacts are provided by E97 and D99. N168 is a glycosylation site (N-linked (GlcNAc...) asparagine). D174 serves as a coordination point for Mg(2+). Residues 249–269 (VFVVLDILLDWSMHNVLWYLC) form a helical membrane-spanning segment. At 270-331 (GISAFLMQKD…SMLEDCAPHF (62 aa)) the chain is on the cytoplasmic side.

The protein belongs to the glycerophosphoryl diester phosphodiesterase family. In terms of assembly, interacts with PRAF2. Interacts with RGS16. Mg(2+) is required as a cofactor. N-glycosylated. In terms of tissue distribution, widely expressed. Highly expressed in the brain and spinal cord, followed by kidney, liver, and testis. In contrast, little or no expression is detected in the heart or spleen.

Its subcellular location is the cell membrane. It localises to the cytoplasmic vesicle membrane. It carries out the reaction sn-glycero-3-phospho-1D-myo-inositol + H2O = myo-inositol + sn-glycerol 3-phosphate + H(+). The catalysed reaction is 1-O-(1Z-octadecenyl)-sn-glycero-3-phospho-(N-5Z,8Z,11Z,14Z-eicosatetraenoyl)-ethanolamine + H2O = 1-O-(1Z-octadecenyl)-sn-glycero-3-phosphate + N-(5Z,8Z,11Z,14Z-eicosatetraenoyl)-ethanolamine + H(+). It catalyses the reaction 1-O-(1Z-octadecenyl)-sn-glycero-3-phospho-(N-9Z-octadecenoyl)-ethanolamine + H2O = 1-O-(1Z-octadecenyl)-sn-glycero-3-phosphate + N-(9Z-octadecenoyl) ethanolamine + H(+). The enzyme catalyses 1-O-(1Z-octadecenyl)-sn-glycero-3-phospho-N-hexadecanoyl-ethanolamine + H2O = 1-O-(1Z-octadecenyl)-sn-glycero-3-phosphate + N-hexadecanoylethanolamine + H(+). It carries out the reaction N-(4Z,7Z,10Z,13Z,16Z,19Z)-docosahexaenoyl-sn-glycero-3-phosphoethanolamine + H2O = N-(4Z,7Z,10Z,13Z,16Z,19Z)-docosahexaenoyl ethanolamine + sn-glycerol 3-phosphate + H(+). The catalysed reaction is N-eicosanoyl-sn-glycero-3-phosphoethanolamine + H2O = N-eicosanoyl ethanolamine + sn-glycerol 3-phosphate + H(+). It catalyses the reaction N-hexadecanoyl-sn-glycero-3-phosphoethanolamine + H2O = N-hexadecanoylethanolamine + sn-glycerol 3-phosphate + H(+). The enzyme catalyses N-(9Z-octadecenoyl)-sn-glycero-3-phosphoethanolamine + H2O = N-(9Z-octadecenoyl) ethanolamine + sn-glycerol 3-phosphate + H(+). It carries out the reaction N-(5Z,8Z,11Z,14Z-eicosatetraenoyl)-sn-glycero-3-phosphoethanolamine + H2O = N-(5Z,8Z,11Z,14Z-eicosatetraenoyl)-ethanolamine + sn-glycerol 3-phosphate + H(+). Its activity is regulated as follows. Inhibited by EDTA, calcium chloride, and zinc chloride. Enhanced by magnesium chloride. Glycerophosphodiester phosphodiesterase activity can be modulated by G-protein signaling pathways. In terms of biological role, hydrolyzes the phosphodiester bond of glycerophosphodiesters such as glycerophosphoinositol (GroPIns) and glycerophosphoethanolamine (GroPEth), to yield a glycerol phosphate and an alcohol. Hydrolyzes glycerophospho-N-acylethanolamines to N-acylethanolamines in the brain and participates in bioactive N-acylethanolamine biosynthesis such as anandamide (an endocannabinoid), N-palmitoylethanolamine (an anti-inflammatory), and N-oleoylethanolamine (an anorexic). In addition, has a lysophospholipase D activity by hydrolyzing N-acyl-lysoplasmenylethanolamine (N-acyl-lysoPlsEt) to N-acylethanolamine. However lysophospholipase D activity is lower than glycerophosphodiester phosphodiesterase activity. Has little or no activity towards glycerophosphocholine. This Mus musculus (Mouse) protein is Glycerophosphodiester phosphodiesterase 1.